The primary structure comprises 588 residues: Sperm-associated microtubule inner protein 4 (588 aa).

Position 219 is a phosphothreonine (threonine 219). Phosphoserine is present on residues serine 224, serine 406, serine 421, serine 427, and serine 437. Tyrosine 441 carries the phosphotyrosine modification. 2 positions are modified to phosphoserine: serine 457 and serine 484. Threonine 512 carries the post-translational modification Phosphothreonine. Residue serine 516 is modified to Phosphoserine. Lysine 543 participates in a covalent cross-link: Glycyl lysine isopeptide (Lys-Gly) (interchain with G-Cter in SUMO2). Serine 545 is modified (phosphoserine).

It is found in the cytoplasm. The protein localises to the cytoskeleton. The protein resides in the microtubule organizing center. It localises to the centrosome. Its subcellular location is the flagellum axoneme. Its function is as follows. Microtubule inner protein (MIP) part of the dynein-decorated doublet microtubules (DMTs) in flagellum axoneme. May serve to reinforce and thus stabilize the microtubule structure in the sperm flagella. This is Sperm-associated microtubule inner protein 4 (Spmip4) from Rattus norvegicus (Rat).